A 264-amino-acid chain; its full sequence is Small ribosomal subunit protein eS1 (264 aa).

The interval 233 to 264 (GEGGGAGKPAGDETGAKVERADGYEPPVQESV) is disordered. Residues 242–255 (AGDETGAKVERADG) show a composition bias toward basic and acidic residues.

Belongs to the eukaryotic ribosomal protein eS1 family. In terms of assembly, component of the small ribosomal subunit. Mature ribosomes consist of a small (40S) and a large (60S) subunit. The 40S subunit contains about 33 different proteins and 1 molecule of RNA (18S). The 60S subunit contains about 49 different proteins and 3 molecules of RNA (28S, 5.8S and 5S). Part of the small subunit (SSU) processome, composed of more than 70 proteins and the RNA chaperone small nucleolar RNA (snoRNA) U3.

Its subcellular location is the cytoplasm. The protein resides in the nucleus. The protein localises to the nucleolus. Its function is as follows. Component of the small ribosomal subunit. The ribosome is a large ribonucleoprotein complex responsible for the synthesis of proteins in the cell. Part of the small subunit (SSU) processome, first precursor of the small eukaryotic ribosomal subunit. During the assembly of the SSU processome in the nucleolus, many ribosome biogenesis factors, an RNA chaperone and ribosomal proteins associate with the nascent pre-rRNA and work in concert to generate RNA folding, modifications, rearrangements and cleavage as well as targeted degradation of pre-ribosomal RNA by the RNA exosome. May play a role during erythropoiesis. The protein is Small ribosomal subunit protein eS1 (rps3a) of Xenopus tropicalis (Western clawed frog).